Reading from the N-terminus, the 249-residue chain is tRNA (guanine-N(1)-)-methyltransferase (249 aa).

Residues Gly113 and 133–138 (VGDYVL) contribute to the S-adenosyl-L-methionine site.

This sequence belongs to the RNA methyltransferase TrmD family. In terms of assembly, homodimer.

It localises to the cytoplasm. The enzyme catalyses guanosine(37) in tRNA + S-adenosyl-L-methionine = N(1)-methylguanosine(37) in tRNA + S-adenosyl-L-homocysteine + H(+). In terms of biological role, specifically methylates guanosine-37 in various tRNAs. This chain is tRNA (guanine-N(1)-)-methyltransferase, found in Tolumonas auensis (strain DSM 9187 / NBRC 110442 / TA 4).